Here is a 407-residue protein sequence, read N- to C-terminus: FK506-binding protein 3 (407 aa).

Disordered stretches follow at residues 46 to 136, 191 to 223, and 236 to 297; these read RIEG…DDEG, DEDE…EDEV, and QDDE…PKLV. Composition is skewed to acidic residues over residues 65-88 and 103-136; these read NFDD…EVSA and DGLD…DDEG. A compositionally biased stretch (acidic residues) spans 236–252; the sequence is QDDEDDEDDEDEEEEPV. The segment covering 253–272 has biased composition (basic and acidic residues); it reads VEPKKILKRAAEEKKQEKAA. The 87-residue stretch at 321-407 folds into the PPIase FKBP-type domain; sequence GSKVGVRYVG…TFDVKVVNIK (87 aa).

Belongs to the FKBP-type PPIase family. FKBP3/4 subfamily.

Its subcellular location is the nucleus. The protein localises to the nucleolus. It carries out the reaction [protein]-peptidylproline (omega=180) = [protein]-peptidylproline (omega=0). Inhibited by both FK506 and rapamycin. In terms of biological role, PPIases accelerate the folding of proteins. It catalyzes the cis-trans isomerization of proline imidic peptide bonds in oligopeptides. This is FK506-binding protein 3 (FPR3) from Yarrowia lipolytica (strain CLIB 122 / E 150) (Yeast).